A 250-amino-acid polypeptide reads, in one-letter code: 3-deoxy-manno-octulosonate cytidylyltransferase (250 aa).

The protein belongs to the KdsB family.

The protein resides in the cytoplasm. It carries out the reaction 3-deoxy-alpha-D-manno-oct-2-ulosonate + CTP = CMP-3-deoxy-beta-D-manno-octulosonate + diphosphate. It functions in the pathway nucleotide-sugar biosynthesis; CMP-3-deoxy-D-manno-octulosonate biosynthesis; CMP-3-deoxy-D-manno-octulosonate from 3-deoxy-D-manno-octulosonate and CTP: step 1/1. It participates in bacterial outer membrane biogenesis; lipopolysaccharide biosynthesis. Functionally, activates KDO (a required 8-carbon sugar) for incorporation into bacterial lipopolysaccharide in Gram-negative bacteria. The chain is 3-deoxy-manno-octulosonate cytidylyltransferase from Cytophaga hutchinsonii (strain ATCC 33406 / DSM 1761 / CIP 103989 / NBRC 15051 / NCIMB 9469 / D465).